The chain runs to 66 residues: Probable Sec-independent protein translocase protein TatE (66 aa).

Residues 1–21 (MEGISITKLLVIAVLIVLLFG) form a helical membrane-spanning segment. The interval 46 to 66 (ETPAAKKSDGVEAAPRVENKE) is disordered.

The protein belongs to the TatA/E family. TatE subfamily.

It is found in the cell inner membrane. In terms of biological role, part of the twin-arginine translocation (Tat) system that transports large folded proteins containing a characteristic twin-arginine motif in their signal peptide across membranes. TatE shares overlapping functions with TatA. The polypeptide is Probable Sec-independent protein translocase protein TatE (Edwardsiella ictaluri (strain 93-146)).